The sequence spans 184 residues: Ras-related protein Rap1 (184 aa).

10 to 17 (GSGGVGKS) is a GTP binding site. The short motif at 32-40 (YDPTIEDSY) is the Effector region element. GTP is bound by residues 57–61 (DTAGT) and 116–119 (NKCD). At Cys-181 the chain carries Cysteine methyl ester. The S-geranylgeranyl cysteine moiety is linked to residue Cys-181. Positions 182–184 (VLL) are cleaved as a propeptide — removed in mature form.

It belongs to the small GTPase superfamily. Ras family.

It is found in the cell membrane. The enzyme catalyses GTP + H2O = GDP + phosphate + H(+). Alternates between an inactive form bound to GDP and an active form bound to GTP. Activated by a guanine nucleotide-exchange factor (GEF) and inactivated by a GTPase-activating protein (GAP). Its function is as follows. Ras proteins bind GDP/GTP and possess intrinsic GTPase activity. Plays a role in photoreceptor cell determination. This Drosophila melanogaster (Fruit fly) protein is Ras-related protein Rap1.